A 214-amino-acid chain; its full sequence is Riboflavin kinase (214 aa).

The tract at residues M1–A91 is H-T-H motif-like. The segment at P92 to E214 is riboflavin kinase. G101 to Q106 provides a ligand contact to CDP. Residues T130 and N132 each coordinate Mg(2+). Positions 182 and 190 each coordinate FMN. CDP is bound at residue I195–R198.

Belongs to the archaeal riboflavin kinase family. Mg(2+) is required as a cofactor.

The catalysed reaction is riboflavin + CTP = CDP + FMN + H(+). The protein operates within cofactor biosynthesis; FMN biosynthesis; FMN from riboflavin (CTP route): step 1/1. Catalyzes the CTP-dependent phosphorylation of riboflavin (vitamin B2) to form flavin mononucleotide (FMN). In Methanocella arvoryzae (strain DSM 22066 / NBRC 105507 / MRE50), this protein is Riboflavin kinase (ribK).